A 289-amino-acid chain; its full sequence is Phosphatidylserine decarboxylase proenzyme (289 aa).

Active-site charge relay system; for autoendoproteolytic cleavage activity residues include D92, H149, and S254. The Schiff-base intermediate with substrate; via pyruvic acid; for decarboxylase activity role is filled by S254. Position 254 is a pyruvic acid (Ser); by autocatalysis (S254).

It belongs to the phosphatidylserine decarboxylase family. PSD-B subfamily. Prokaryotic type I sub-subfamily. As to quaternary structure, heterodimer of a large membrane-associated beta subunit and a small pyruvoyl-containing alpha subunit. Pyruvate serves as cofactor. Post-translationally, is synthesized initially as an inactive proenzyme. Formation of the active enzyme involves a self-maturation process in which the active site pyruvoyl group is generated from an internal serine residue via an autocatalytic post-translational modification. Two non-identical subunits are generated from the proenzyme in this reaction, and the pyruvate is formed at the N-terminus of the alpha chain, which is derived from the carboxyl end of the proenzyme. The autoendoproteolytic cleavage occurs by a canonical serine protease mechanism, in which the side chain hydroxyl group of the serine supplies its oxygen atom to form the C-terminus of the beta chain, while the remainder of the serine residue undergoes an oxidative deamination to produce ammonia and the pyruvoyl prosthetic group on the alpha chain. During this reaction, the Ser that is part of the protease active site of the proenzyme becomes the pyruvoyl prosthetic group, which constitutes an essential element of the active site of the mature decarboxylase.

It is found in the cell membrane. The catalysed reaction is a 1,2-diacyl-sn-glycero-3-phospho-L-serine + H(+) = a 1,2-diacyl-sn-glycero-3-phosphoethanolamine + CO2. The protein operates within phospholipid metabolism; phosphatidylethanolamine biosynthesis; phosphatidylethanolamine from CDP-diacylglycerol: step 2/2. In terms of biological role, catalyzes the formation of phosphatidylethanolamine (PtdEtn) from phosphatidylserine (PtdSer). The polypeptide is Phosphatidylserine decarboxylase proenzyme (Pseudomonas paraeruginosa (strain DSM 24068 / PA7) (Pseudomonas aeruginosa (strain PA7))).